Reading from the N-terminus, the 743-residue chain is Ribosome biogenesis protein BOP1 homolog (743 aa).

5 WD repeats span residues 365-404 (GHTA…LMKR), 575-615 (KFSE…RRFK), 617-655 (SGGV…KPYK), 659-701 (SHKG…DYNK), and 712-743 (KHQR…AWTE).

It belongs to the WD repeat BOP1/ERB1 family.

Its subcellular location is the nucleus. The protein localises to the nucleolus. The protein resides in the nucleoplasm. Required for maturation of ribosomal RNAs and formation of the large ribosomal subunit. In Leishmania braziliensis, this protein is Ribosome biogenesis protein BOP1 homolog.